We begin with the raw amino-acid sequence, 505 residues long: Oxidative stress-induced growth inhibitor 2 (505 aa).

It belongs to the OKL38 family. The cofactor is NADPH. In terms of tissue distribution, ubiquitous. Expressed at higher levels in testis and ovary.

The protein localises to the midbody. Its function is as follows. Monooxygenase catalytic activity. May be involved in meiosis or the maturation of germ cells. This Homo sapiens (Human) protein is Oxidative stress-induced growth inhibitor 2.